We begin with the raw amino-acid sequence, 872 residues long: Paramyosin (872 aa).

The tract at residues 1–31 (MSLYRSPSAALLKSPSQAAFGAPFGSMSVAD) is nonhelical region. Residues 32–851 (LGSLTRLEDK…ESSLHLIRAK (820 aa)) are a coiled coil. An interaction with unc-89 region spans residues 294–376 (EITQWKSKFD…ALLERAREQL (83 aa)). A nonhelical region region spans residues 856-866 (VVTGKSSSKIF).

The protein belongs to the paramyosin family. Homodimer. May interact with unc-89 (via SH3 domain). In terms of processing, phosphorylated on serine residues in the N-terminal non-helical region. In terms of tissue distribution, expressed in body wall muscles of larvae and adults (at protein level). Expressed in gonadal myoepithelial sheath cells (at protein level).

Its subcellular location is the cytoplasm. The protein localises to the myofibril. The protein resides in the sarcomere. It is found in the a band. Its function is as follows. Structural component of the muscle thick filaments which is involved in assembly and organization of sarcomere myofilaments. Involved in ovulation. Plays a role in the formation of muscle connections, also called muscle arm extensions, between the body wall and the motor axons in the dorsal and ventral cord. The polypeptide is Paramyosin (unc-15) (Caenorhabditis elegans).